The following is a 273-amino-acid chain: Shikimate dehydrogenase (NADP(+)) (273 aa).

Residues 15–17 and Thr-62 each bind shikimate; that span reads SKS. Residue Lys-66 is the Proton acceptor of the active site. Asp-78 serves as a coordination point for NADP(+). Positions 87 and 103 each coordinate shikimate. Residues 127–131, 150–155, and Met-214 each bind NADP(+); these read GAGGA and NRTYAR. Tyr-216 provides a ligand contact to shikimate. Gly-238 serves as a coordination point for NADP(+).

This sequence belongs to the shikimate dehydrogenase family. As to quaternary structure, homodimer.

The enzyme catalyses shikimate + NADP(+) = 3-dehydroshikimate + NADPH + H(+). Its pathway is metabolic intermediate biosynthesis; chorismate biosynthesis; chorismate from D-erythrose 4-phosphate and phosphoenolpyruvate: step 4/7. Involved in the biosynthesis of the chorismate, which leads to the biosynthesis of aromatic amino acids. Catalyzes the reversible NADPH linked reduction of 3-dehydroshikimate (DHSA) to yield shikimate (SA). The protein is Shikimate dehydrogenase (NADP(+)) of Yersinia enterocolitica serotype O:8 / biotype 1B (strain NCTC 13174 / 8081).